Consider the following 326-residue polypeptide: DNA repair protein RAD51 homolog 4 (326 aa).

A preferentially binds ssDNA region spans residues 1-83; it reads MGVLRAGLCP…ELKTSTAILS (83 aa). 107 to 114 provides a ligand contact to ATP; sequence GAPGSGKT.

Belongs to the RecA family. RAD51 subfamily. Part of the BCDX2 complex consisting of RAD51B, RAD51C, RAD51D and XRCC2; the complex has a ring-like structure arranged into a flat disc around a central channel. In the absence of DNA, the BCDX2 subcomplex XRCC2:RAD51D formed a multimeric ring structure; in the presence of single-stranded DNA it formed a filamentous structure with the ssDNA. Interacts with SWSAP1 and ZSWIM7; involved in homologous recombination repair. Interacts with BLM; required for stimulation of BLM activity by the BCDX2 subcomplex XRCC2:RAD51D.

It localises to the nucleus. In terms of biological role, involved in the homologous recombination repair (HRR) pathway of double-stranded DNA breaks arising during DNA replication or induced by DNA-damaging agents. Bind to single-stranded DNA (ssDNA) and has DNA-dependent ATPase activity. Part of the RAD51 paralog protein complex BCDX2 which acts in the BRCA1-BRCA2-dependent HR pathway. Upon DNA damage, BCDX2 acts downstream of BRCA2 recruitment and upstream of RAD51 recruitment. BCDX2 binds predominantly to the intersection of the four duplex arms of the Holliday junction and to junction of replication forks. The BCDX2 complex was originally reported to bind single-stranded DNA, single-stranded gaps in duplex DNA and specifically to nicks in duplex DNA. Involved in telomere maintenance. The BCDX2 subcomplex XRCC2:RAD51D can stimulate Holliday junction resolution by BLM. This is DNA repair protein RAD51 homolog 4 (RAD51D) from Bos taurus (Bovine).